The sequence spans 467 residues: Hydroxyacid-oxoacid transhydrogenase, mitochondrial (467 aa).

Lys-445 is subject to N6-acetyllysine. A Phosphoserine modification is found at Ser-452.

The protein belongs to the iron-containing alcohol dehydrogenase family. Hydroxyacid-oxoacid transhydrogenase subfamily. In terms of tissue distribution, only expressed in adult liver.

Its subcellular location is the mitochondrion. The enzyme catalyses (S)-3-hydroxybutanoate + 2-oxoglutarate = (R)-2-hydroxyglutarate + acetoacetate. The catalysed reaction is 4-hydroxybutanoate + 2-oxoglutarate = (R)-2-hydroxyglutarate + succinate semialdehyde. Functionally, catalyzes the cofactor-independent reversible oxidation of gamma-hydroxybutyrate (GHB) to succinic semialdehyde (SSA) coupled to reduction of 2-ketoglutarate (2-KG) to D-2-hydroxyglutarate (D-2-HG). D,L-3-hydroxyisobutyrate and L-3-hydroxybutyrate (L-3-OHB) are also substrates for HOT with 10-fold lower activities. The protein is Hydroxyacid-oxoacid transhydrogenase, mitochondrial (ADHFE1) of Homo sapiens (Human).